Here is a 215-residue protein sequence, read N- to C-terminus: Redox-sensing transcriptional repressor Rex (215 aa).

The H-T-H motif DNA-binding region spans 18 to 57 (LYYRFLKNLHASGKQRVSSAELSEAVKVDPATIRRDFSYF). 92 to 97 (GVGNLG) lines the NAD(+) pocket.

The protein belongs to the transcriptional regulatory Rex family. As to quaternary structure, homodimer.

Its subcellular location is the cytoplasm. In terms of biological role, modulates transcription in response to changes in cellular NADH/NAD(+) redox state. The sequence is that of Redox-sensing transcriptional repressor Rex from Geobacillus sp. (strain WCH70).